The primary structure comprises 235 residues: Purine nucleoside phosphorylase DeoD-type (235 aa).

His-4 serves as a coordination point for a purine D-ribonucleoside. Phosphate contacts are provided by residues Gly-20, Arg-24, Arg-43, and 87-90 (RVGT). Residues 179 to 181 (EME) and 203 to 204 (SD) each bind a purine D-ribonucleoside. The active-site Proton donor is Asp-204.

This sequence belongs to the PNP/UDP phosphorylase family. As to quaternary structure, homohexamer; trimer of homodimers.

The enzyme catalyses a purine D-ribonucleoside + phosphate = a purine nucleobase + alpha-D-ribose 1-phosphate. It catalyses the reaction a purine 2'-deoxy-D-ribonucleoside + phosphate = a purine nucleobase + 2-deoxy-alpha-D-ribose 1-phosphate. Functionally, catalyzes the reversible phosphorolytic breakdown of the N-glycosidic bond in the beta-(deoxy)ribonucleoside molecules, with the formation of the corresponding free purine bases and pentose-1-phosphate. The protein is Purine nucleoside phosphorylase DeoD-type of Clostridium perfringens (strain ATCC 13124 / DSM 756 / JCM 1290 / NCIMB 6125 / NCTC 8237 / Type A).